A 284-amino-acid chain; its full sequence is MSSEYAKLVASLSNQDILTKWPEVTPLKKISGIPRSAGSDSSDSDLFDGHDEEQIRLMEELCIVLDYDDKPVGAGTKKLCHIMDNINAGLLHRAFSVFLFNEDGKLLLQQRADEKITFANMWTNTCCSHPLCVPSELGVDSSLEGSKDVNNLTNAVKGAKVAAQRKLEHELGIPFEDAPIENFTYLTRIHYKSPSGDESSKWGEHEIDYILILKTKNDITVNANYNEVRDFKYVSADELKVMFEDDSLVFTPWFKLICQSFLFKWWDNLDNLDQFKDEEIHRLL.

Position 77 (K77) interacts with substrate. Mg(2+) contacts are provided by H81 and H92. The region spanning 90–256 is the Nudix hydrolase domain; that stretch reads LLHRAFSVFL…SLVFTPWFKL (167 aa). 2 residues coordinate substrate: R111 and K115. C127 is a catalytic residue. A substrate-binding site is contributed by S128. A Nudix box motif is present at residues 128–172; sequence SHPLCVPSELGVDSSLEGSKDVNNLTNAVKGAKVAAQRKLEHELG. Residues E204 and E206 each contribute to the Mg(2+) site. The active site involves E206.

It belongs to the IPP isomerase type 1 family. The cofactor is Mg(2+).

The protein localises to the cytoplasm. The catalysed reaction is isopentenyl diphosphate = dimethylallyl diphosphate. Its pathway is isoprenoid biosynthesis; dimethylallyl diphosphate biosynthesis; dimethylallyl diphosphate from isopentenyl diphosphate: step 1/1. Isopentenyl-diphosphate delta-isomerase; part of the second module of ergosterol biosynthesis pathway that includes the middle steps of the pathway. IDI1 catalyzes the 1,3-allylic rearrangement of isopentenyl (IPP) to its highly electrophilic allylic isomer, dimethylallyl diphosphate (DMAPP). The second module is carried out in the vacuole and involves the formation of farnesyl diphosphate, which is also an important intermediate in the biosynthesis of ubiquinone, dolichol, heme and prenylated proteins. Activity by the mevalonate kinase ERG12 first converts mevalonate into 5-phosphomevalonate. 5-phosphomevalonate is then further converted to 5-diphosphomevalonate by the phosphomevalonate kinase ERG8. The diphosphomevalonate decarboxylase MVD then produces isopentenyl diphosphate. The isopentenyl-diphosphate delta-isomerase IDI1 then catalyzes the 1,3-allylic rearrangement of the homoallylic substrate isopentenyl (IPP) to its highly electrophilic allylic isomer, dimethylallyl diphosphate (DMAPP). Finally the farnesyl diphosphate synthase ERG20 catalyzes the sequential condensation of isopentenyl pyrophosphate with dimethylallyl pyrophosphate, and then with the resultant geranylpyrophosphate to the ultimate product farnesyl pyrophosphate. This is Isopentenyl-diphosphate delta-isomerase from Candida albicans (strain SC5314 / ATCC MYA-2876) (Yeast).